The chain runs to 267 residues: Methylglyoxal reductase DkgB (267 aa).

The active-site Proton donor is the Tyr39. His97 is a binding site for substrate. NADP(+) is bound at residue 179 to 231 (MTLAYGKALKDEVIARIAAKHNATPAQVILAWAMGEGYSVIPSSTKRENLESN).

Belongs to the aldo/keto reductase family. Monomer.

It localises to the cytoplasm. It carries out the reaction hydroxyacetone + NADP(+) = methylglyoxal + NADPH + H(+). Functionally, aldo-keto reductase that significantly contributes to cellular methylglyoxal detoxification by catalyzing the NADPH-dependent conversion of methylglyoxal to acetol. In Escherichia coli O157:H7, this protein is Methylglyoxal reductase DkgB.